A 105-amino-acid polypeptide reads, in one-letter code: Small ribosomal subunit protein bS18 (105 aa).

A compositionally biased stretch (polar residues) spans 1-10; the sequence is MAEETNQQAP. The disordered stretch occupies residues 1–34; it reads MAEETNQQAPESGASSSQPTSRPSGPRGGSGGRK. The span at 12 to 25 shows a compositional bias: low complexity; the sequence is SGASSSQPTSRPSG.

It belongs to the bacterial ribosomal protein bS18 family. In terms of assembly, part of the 30S ribosomal subunit. Forms a tight heterodimer with protein bS6.

In terms of biological role, binds as a heterodimer with protein bS6 to the central domain of the 16S rRNA, where it helps stabilize the platform of the 30S subunit. This is Small ribosomal subunit protein bS18 from Acidobacterium capsulatum (strain ATCC 51196 / DSM 11244 / BCRC 80197 / JCM 7670 / NBRC 15755 / NCIMB 13165 / 161).